A 257-amino-acid chain; its full sequence is 5-oxoprolinase subunit A (257 aa).

It belongs to the LamB/PxpA family. In terms of assembly, forms a complex composed of PxpA, PxpB and PxpC.

It carries out the reaction 5-oxo-L-proline + ATP + 2 H2O = L-glutamate + ADP + phosphate + H(+). Functionally, catalyzes the cleavage of 5-oxoproline to form L-glutamate coupled to the hydrolysis of ATP to ADP and inorganic phosphate. The sequence is that of 5-oxoprolinase subunit A from Oceanobacillus iheyensis (strain DSM 14371 / CIP 107618 / JCM 11309 / KCTC 3954 / HTE831).